We begin with the raw amino-acid sequence, 356 residues long: MKLTVQQLVRPEIAAIGAYHVAAADGFIKLDAMENPWPLPIELQHELAAELAQVALNRYPDADGGGLKAALRAAFAIPAAAGIVLGNGSDELITLVTQALARPGAKLLALEPSFVMYKMNALFSGLQYVGVPLRADFTLDLPATLAAIEREQPAVVFVSYPNNPTGPRYGRDEVMAICRAAPGLVVVDEAYQSFASDSFMDLAGELDNLLVMRTLSKLGLAGIRLGYAAASPAWINELNKVRPPYNVNVLTIAAARFALKHLDVFNRQAAELRAERAKLSAALAALPQLAAFPSEANFVTVRAPDAPALFQHLKASGILIKQLHGSHPLLENCLRLTVGSPDENAALLSAIQRFFV.

Lys217 is subject to N6-(pyridoxal phosphate)lysine.

This sequence belongs to the class-II pyridoxal-phosphate-dependent aminotransferase family. Histidinol-phosphate aminotransferase subfamily. As to quaternary structure, homodimer. Pyridoxal 5'-phosphate is required as a cofactor.

It carries out the reaction L-histidinol phosphate + 2-oxoglutarate = 3-(imidazol-4-yl)-2-oxopropyl phosphate + L-glutamate. The protein operates within amino-acid biosynthesis; L-histidine biosynthesis; L-histidine from 5-phospho-alpha-D-ribose 1-diphosphate: step 7/9. In Chromobacterium violaceum (strain ATCC 12472 / DSM 30191 / JCM 1249 / CCUG 213 / NBRC 12614 / NCIMB 9131 / NCTC 9757 / MK), this protein is Histidinol-phosphate aminotransferase.